Consider the following 424-residue polypeptide: UDP-N-acetylglucosamine 1-carboxyvinyltransferase (424 aa).

A phosphoenolpyruvate-binding site is contributed by 22–23; the sequence is KN. Arginine 93 contacts UDP-N-acetyl-alpha-D-glucosamine. The active-site Proton donor is cysteine 117. Position 117 is a 2-(S-cysteinyl)pyruvic acid O-phosphothioketal (cysteine 117). Residues 122-126, 162-165, aspartate 307, and isoleucine 329 contribute to the UDP-N-acetyl-alpha-D-glucosamine site; these read RPVDL and KVSV.

It belongs to the EPSP synthase family. MurA subfamily.

It localises to the cytoplasm. The catalysed reaction is phosphoenolpyruvate + UDP-N-acetyl-alpha-D-glucosamine = UDP-N-acetyl-3-O-(1-carboxyvinyl)-alpha-D-glucosamine + phosphate. Its pathway is cell wall biogenesis; peptidoglycan biosynthesis. Functionally, cell wall formation. Adds enolpyruvyl to UDP-N-acetylglucosamine. The chain is UDP-N-acetylglucosamine 1-carboxyvinyltransferase from Histophilus somni (strain 129Pt) (Haemophilus somnus).